A 157-amino-acid polypeptide reads, in one-letter code: MFDILMYLFENYVHSEIELLVDEDELTKELTRAGFHQADILKALSWLERLADLQESDKPYLCNHAQQSFRIYTKDEMAKLDVESRGFLLFLEQIQVLSVETREMVIDRVMELDEASLILDDLKWVILMVLFNVPGNESAYEQMEDLIFEQPEGRLHS.

The protein belongs to the Smg family.

This is Protein Smg homolog from Shewanella denitrificans (strain OS217 / ATCC BAA-1090 / DSM 15013).